A 185-amino-acid chain; its full sequence is Elongation factor P (185 aa).

Belongs to the elongation factor P family.

The protein localises to the cytoplasm. It participates in protein biosynthesis; polypeptide chain elongation. In terms of biological role, involved in peptide bond synthesis. Stimulates efficient translation and peptide-bond synthesis on native or reconstituted 70S ribosomes in vitro. Probably functions indirectly by altering the affinity of the ribosome for aminoacyl-tRNA, thus increasing their reactivity as acceptors for peptidyl transferase. This Acetivibrio thermocellus (strain ATCC 27405 / DSM 1237 / JCM 9322 / NBRC 103400 / NCIMB 10682 / NRRL B-4536 / VPI 7372) (Clostridium thermocellum) protein is Elongation factor P.